The following is a 156-amino-acid chain: Small ribosomal subunit protein uS7 (156 aa).

Belongs to the universal ribosomal protein uS7 family. In terms of assembly, part of the 30S ribosomal subunit. Contacts proteins S9 and S11.

Functionally, one of the primary rRNA binding proteins, it binds directly to 16S rRNA where it nucleates assembly of the head domain of the 30S subunit. Is located at the subunit interface close to the decoding center, probably blocks exit of the E-site tRNA. This chain is Small ribosomal subunit protein uS7, found in Exiguobacterium sibiricum (strain DSM 17290 / CCUG 55495 / CIP 109462 / JCM 13490 / 255-15).